We begin with the raw amino-acid sequence, 91 residues long: Large ribosomal subunit protein uL23 (91 aa).

It belongs to the universal ribosomal protein uL23 family. Part of the 50S ribosomal subunit. Contacts protein L29, and trigger factor when it is bound to the ribosome.

Its function is as follows. One of the early assembly proteins it binds 23S rRNA. One of the proteins that surrounds the polypeptide exit tunnel on the outside of the ribosome. Forms the main docking site for trigger factor binding to the ribosome. This Staphylococcus saprophyticus subsp. saprophyticus (strain ATCC 15305 / DSM 20229 / NCIMB 8711 / NCTC 7292 / S-41) protein is Large ribosomal subunit protein uL23.